Here is a 679-residue protein sequence, read N- to C-terminus: Glycine--tRNA ligase beta subunit (679 aa).

This sequence belongs to the class-II aminoacyl-tRNA synthetase family. In terms of assembly, tetramer of two alpha and two beta subunits.

Its subcellular location is the cytoplasm. It carries out the reaction tRNA(Gly) + glycine + ATP = glycyl-tRNA(Gly) + AMP + diphosphate. This is Glycine--tRNA ligase beta subunit (glyS) from Bacillus subtilis (strain 168).